Reading from the N-terminus, the 156-residue chain is MTEALRRVWAKDLDARALYELLKLRVEVFVVEQACPYPELDGRDLLAETRHFWLETPDGEVTCTLRLMEEHAGGEKVFRIGRLCTKRDARGQGHSNRLLCAALAEVGDYPCRIDAQAYLTAMYAQHGFVRDGDEFLDDGIPHVPMLRPGSGQVERP.

Residues 8-150 (VWAKDLDARA…PHVPMLRPGS (143 aa)) enclose the N-acetyltransferase domain.

The protein belongs to the UPF0039 (ElaA) family.

The chain is UPF0039 protein Mb2876c from Mycobacterium bovis (strain ATCC BAA-935 / AF2122/97).